A 249-amino-acid chain; its full sequence is uncharacterized protein (249 aa).

ATP is bound at residue 7-14 (GKGGCGKS).

This is an uncharacterized protein from Methanocaldococcus jannaschii (strain ATCC 43067 / DSM 2661 / JAL-1 / JCM 10045 / NBRC 100440) (Methanococcus jannaschii).